We begin with the raw amino-acid sequence, 164 residues long: Cyclic pyranopterin monophosphate synthase (164 aa).

Substrate-binding positions include 75–77 and 116–117; these read MCH and ME. The active site involves Asp-131.

The protein belongs to the MoaC family. As to quaternary structure, homohexamer; trimer of dimers.

The catalysed reaction is (8S)-3',8-cyclo-7,8-dihydroguanosine 5'-triphosphate = cyclic pyranopterin phosphate + diphosphate. Its pathway is cofactor biosynthesis; molybdopterin biosynthesis. In terms of biological role, catalyzes the conversion of (8S)-3',8-cyclo-7,8-dihydroguanosine 5'-triphosphate to cyclic pyranopterin monophosphate (cPMP). This is Cyclic pyranopterin monophosphate synthase from Staphylococcus aureus (strain Mu3 / ATCC 700698).